A 554-amino-acid chain; its full sequence is Eukaryotic translation initiation factor 3 subunit D-2 (554 aa).

Residues 291 to 305 (QFDLLTVNETALEPP) form an RNA gate region. Residues 530–554 (NAFDSDGNEDEETSEDRPFLKSMAN) are disordered.

This sequence belongs to the eIF-3 subunit D family. Component of the eukaryotic translation initiation factor 3 (eIF-3) complex. The eIF-3 complex interacts with pix.

It is found in the cytoplasm. MRNA cap-binding component of the eukaryotic translation initiation factor 3 (eIF-3) complex, which is involved in protein synthesis of a specialized repertoire of mRNAs and, together with other initiation factors, stimulates binding of mRNA and methionyl-tRNAi to the 40S ribosome. The eIF-3 complex specifically targets and initiates translation of a subset of mRNAs involved in cell proliferation. In the eIF-3 complex, eif3d specifically recognizes and binds the 7-methylguanosine cap of a subset of mRNAs. The protein is Eukaryotic translation initiation factor 3 subunit D-2 of Drosophila mojavensis (Fruit fly).